The chain runs to 210 residues: Natriuretic peptide BM026 (210 aa).

The signal sequence occupies residues 1-26 (MVGPSRLAGGGLLLLLLALLPVALDG). Positions 83–99 (CFGHKIDRISHSSGMGC) are natriuretic peptide domain 1. Cys83 and Cys99 are oxidised to a cystine. A compositionally biased stretch (basic and acidic residues) spans 122-134 (ESKKSRAARDRMV). The segment at 122–210 (ESKKSRAARD…QFNSKSSQVA (89 aa)) is disordered. Residues 140-150 (AGGGGGGGGGD) are compositionally biased toward gly residues. Positions 156–176 (ELAKKDQHNNCFGRRIDRISH) are enriched in basic and acidic residues. Positions 166 to 182 (CFGRRIDRISHSTDLGC) are natriuretic peptide domain 2. An intrachain disulfide couples Cys166 to Cys182. Residues 201-210 (QFNSKSSQVA) show a composition bias toward polar residues.

This sequence belongs to the natriuretic peptide family. In terms of tissue distribution, expressed by the venom gland.

The protein resides in the secreted. Its function is as follows. Natriuretic peptide that dose-dependently induces the rapid relaxation of rat aortic strips phenylephrine-precontracted. Acts by stimulating cGMP production in a dose-dependent manner (by probably activating NPR1 and/or NPR2). May also show potent hypotensive effects. This chain is Natriuretic peptide BM026, found in Bungarus multicinctus (Many-banded krait).